A 317-amino-acid chain; its full sequence is Transaldolase (317 aa).

The Schiff-base intermediate with substrate role is filled by lysine 126.

The protein belongs to the transaldolase family. Type 1 subfamily. In terms of assembly, homodimer.

It is found in the cytoplasm. It catalyses the reaction D-sedoheptulose 7-phosphate + D-glyceraldehyde 3-phosphate = D-erythrose 4-phosphate + beta-D-fructose 6-phosphate. It functions in the pathway carbohydrate degradation; pentose phosphate pathway; D-glyceraldehyde 3-phosphate and beta-D-fructose 6-phosphate from D-ribose 5-phosphate and D-xylulose 5-phosphate (non-oxidative stage): step 2/3. Its function is as follows. Transaldolase is important for the balance of metabolites in the pentose-phosphate pathway. In Burkholderia ambifaria (strain MC40-6), this protein is Transaldolase.